The primary structure comprises 590 residues: V-type ATP synthase alpha chain (590 aa).

231 to 238 (GPFGSGKT) contributes to the ATP binding site.

The protein belongs to the ATPase alpha/beta chains family.

The enzyme catalyses ATP + H2O + 4 H(+)(in) = ADP + phosphate + 5 H(+)(out). Functionally, produces ATP from ADP in the presence of a proton gradient across the membrane. The V-type alpha chain is a catalytic subunit. This is V-type ATP synthase alpha chain from Clostridium botulinum (strain Langeland / NCTC 10281 / Type F).